Reading from the N-terminus, the 133-residue chain is Phosphomevalonate dehydratase small subunit (133 aa).

Serine 62 functions as the Proton acceptor in the catalytic mechanism.

Belongs to the AcnX type II small subunit family. In terms of assembly, heterodimer composed of a large subunit (PMDh-L) and a small subunit (PMDh-S).

The catalysed reaction is (R)-5-phosphomevalonate = (2E)-3-methyl-5-phosphooxypent-2-enoate + H2O. It functions in the pathway isoprenoid biosynthesis; isopentenyl diphosphate biosynthesis via mevalonate pathway. Functionally, component of a hydro-lyase that catalyzes the dehydration of mevalonate 5-phosphate (MVA5P) to form trans-anhydromevalonate 5-phosphate (tAHMP). Involved in the archaeal mevalonate (MVA) pathway, which provides fundamental precursors for isoprenoid biosynthesis, such as isopentenyl diphosphate (IPP) and dimethylallyl diphosphate (DMAPP). The sequence is that of Phosphomevalonate dehydratase small subunit from Thermococcus kodakarensis (strain ATCC BAA-918 / JCM 12380 / KOD1) (Pyrococcus kodakaraensis (strain KOD1)).